The chain runs to 168 residues: Protein-export protein SecB (168 aa).

Belongs to the SecB family. In terms of assembly, homotetramer, a dimer of dimers. One homotetramer interacts with 1 SecA dimer.

It is found in the cytoplasm. Functionally, one of the proteins required for the normal export of preproteins out of the cell cytoplasm. It is a molecular chaperone that binds to a subset of precursor proteins, maintaining them in a translocation-competent state. It also specifically binds to its receptor SecA. This chain is Protein-export protein SecB, found in Saccharophagus degradans (strain 2-40 / ATCC 43961 / DSM 17024).